Reading from the N-terminus, the 331-residue chain is Ferredoxin--NADP reductase (331 aa).

Positions 14, 33, 41, 46, 86, 120, 284, and 327 each coordinate FAD.

Belongs to the ferredoxin--NADP reductase type 2 family. In terms of assembly, homodimer. FAD serves as cofactor.

It carries out the reaction 2 reduced [2Fe-2S]-[ferredoxin] + NADP(+) + H(+) = 2 oxidized [2Fe-2S]-[ferredoxin] + NADPH. This Picrophilus torridus (strain ATCC 700027 / DSM 9790 / JCM 10055 / NBRC 100828 / KAW 2/3) protein is Ferredoxin--NADP reductase.